We begin with the raw amino-acid sequence, 113 residues long: Large ribosomal subunit protein bL19 (113 aa).

The protein belongs to the bacterial ribosomal protein bL19 family.

In terms of biological role, this protein is located at the 30S-50S ribosomal subunit interface and may play a role in the structure and function of the aminoacyl-tRNA binding site. The chain is Large ribosomal subunit protein bL19 from Mycolicibacterium gilvum (strain PYR-GCK) (Mycobacterium gilvum (strain PYR-GCK)).